Reading from the N-terminus, the 1424-residue chain is S-layer protein A (1424 aa).

The signal sequence occupies residues 1–24; the sequence is MNKLVGLLVSSLFLASILIGIAPA. N-linked (GlcNAc...) asparagine glycans are attached at residues Asn-60, Asn-70, Asn-276, Asn-295, Asn-342, Asn-358, Asn-377, Asn-468, Asn-517, Asn-545, Asn-559, Asn-581, Asn-633, Asn-714, Asn-875, Asn-914, Asn-955, Asn-989, Asn-1018, Asn-1042, Asn-1093, Asn-1134, Asn-1197, Asn-1217, Asn-1252, Asn-1276, Asn-1304, and Asn-1419.

It belongs to the Sulfolobales SlaA family. The mushroom-shaped unit cells of the Sulfolobales' S-layers may consist of three SlaB subunits and six SlaA subunits. Post-translationally, glycosylated. C-terminal glycosylation sites are modified with a heterogeneous family of glycans, with the largest having a composition Glc(1)Man(2)GlcNAc(2) plus 6-sulfoquinovose (QuiS).

The protein localises to the secreted. Its subcellular location is the cell wall. The protein resides in the S-layer. Its function is as follows. S-layer large protein. May form the highly ordered outer sheath. This Sulfolobus acidocaldarius (strain ATCC 33909 / DSM 639 / JCM 8929 / NBRC 15157 / NCIMB 11770) protein is S-layer protein A.